The following is a 444-amino-acid chain: 1,4-beta-D-glucan glucohydrolase (444 aa).

Residue glutamate 164 is the Proton donor of the active site. The Nucleophile role is filled by glutamate 349.

It belongs to the glycosyl hydrolase 1 family. As to quaternary structure, monomer.

It catalyses the reaction Hydrolysis of (1-&gt;4)-linkages in (1-&gt;4)-beta-D-glucans, to remove successive glucose units.. The enzyme catalyses Hydrolysis of terminal, non-reducing beta-D-glucosyl residues with release of beta-D-glucose.. It participates in glycan metabolism; cellulose degradation. Its pathway is glycan metabolism; beta-D-glucan degradation. With respect to regulation, activated by glucose up to 200 mM when p-nitrophenyl-beta-glucoside is used as the substrate. This activation by end product concentrations may be due to a transglycosylation activity of the enzyme. Broad substrate specificity glycosidase. Releases glucose from soluble glucooligomers, with a preference for longer oligomers; acts more readily on cellotetraose than on cellobiose. Displays similar activities towards the disaccharides lactose and cellobiose. Is also able to hydrolyze various aryl-beta-glycosides in vitro. This chain is 1,4-beta-D-glucan glucohydrolase, found in Thermotoga neapolitana (strain ATCC 49049 / DSM 4359 / NBRC 107923 / NS-E).